A 220-amino-acid chain; its full sequence is Large ribosomal subunit protein uL3 (220 aa).

Positions 61–81 (KGSKSNKYANKPAEGHAKKAD) are disordered.

The protein belongs to the universal ribosomal protein uL3 family. In terms of assembly, part of the 50S ribosomal subunit. Forms a cluster with proteins L14 and L19.

Its function is as follows. One of the primary rRNA binding proteins, it binds directly near the 3'-end of the 23S rRNA, where it nucleates assembly of the 50S subunit. This Staphylococcus epidermidis (strain ATCC 12228 / FDA PCI 1200) protein is Large ribosomal subunit protein uL3.